The primary structure comprises 729 residues: Oligopeptide transporter 4 (729 aa).

Ala2 is subject to N-acetylalanine. The residue at position 8 (Ser8) is a Phosphoserine. The next 16 membrane-spanning stretches (helical) occupy residues 37–57 (MWFLGLISCSLLSFLNQFFSY), 61–81 (PLVITQITVQVATLPIGHFLA), 123–143 (AFGSGSAYAVGIITIIKAFYG), 148–168 (FIAGWLLIITTQVLGYGWAGL), 177–194 (AHMWWPSTLVQVSLFRAL), 207–227 (FFVIALVCSFGWYIVPGYLFT), 256–276 (GLGAFTLDWTAVASFLFSPLI), 279–299 (FFAIANVFIGYVLLIYFVLPL), 352–372 (LSMFFALTYGLGFATIASTLT), 410–430 (WWFYSMLAATLLISLALCVFL), 438–458 (WWGLVFASAMAFVFTLPISII), 522–542 (FLVQFIGTILAGTINITVAWW), 592–612 (YAAMNWFFLGGALGPVIVWSL), 621–637 (WIPLVNLPVLLGATAMM), 640–660 (ATAVNYNSWILVGTIFNLFVF), and 673–693 (VLSAAMDAGVAFMAVLLYFSV).

This sequence belongs to the oligopeptide OPT transporter (TC 2.A.67.1) family. Expressed in flowers, leaves, roots, and stems.

It localises to the membrane. Its function is as follows. Involved in the translocation of tetra- and pentapeptides across the cellular membrane in an energy-dependent manner. The sequence is that of Oligopeptide transporter 4 (OPT4) from Arabidopsis thaliana (Mouse-ear cress).